The chain runs to 367 residues: E3 ubiquitin-protein ligase RGLG3 (367 aa).

Residues 37–257 (NLILGIDFTK…KEAAFALAAL (221 aa)) enclose the VWFA domain. The RING-type zinc-finger motif lies at 323–356 (CPICLTNPKDMAFSCGHTTCKECGVVITTCPLCR).

Interacts with UBC30, GRXS17 and GLB3. Binds to and coactivates GAF1/IDD2 and ENY/IDD1. In terms of tissue distribution, widely expressed.

The protein localises to the cytoplasm. It localises to the nucleus. It carries out the reaction S-ubiquitinyl-[E2 ubiquitin-conjugating enzyme]-L-cysteine + [acceptor protein]-L-lysine = [E2 ubiquitin-conjugating enzyme]-L-cysteine + N(6)-ubiquitinyl-[acceptor protein]-L-lysine.. Its function is as follows. Possesses E3 ubiquitin-protein ligase in vitro. Acts as upstream modulator of jasmonate (JA) signaling in response to various stimuli, such as JA-inhibited root growth, JA-inductive gene expression, coronatine-mediated pathogen susceptibility, wound-stimulated expression of JA-responsive genes and wound-induced JA biosynthesis. Controls fumonisin B1 (FB1)-triggered programmed cell death (PCD) by modulating the JA signaling pathway. May mediate salicylic acid (SA) suppression of JA signaling in FB1-induced responses. May mediate the formation of 'Lys-48'-linked multiubiquitin chains. Mediates the polyubiquitination and subsequent proteasomal degradation of the target protein GRXS17. This is E3 ubiquitin-protein ligase RGLG3 from Arabidopsis thaliana (Mouse-ear cress).